The chain runs to 283 residues: Pantothenate synthetase (283 aa).

30 to 37 is a binding site for ATP; it reads MGNLHDGH. His37 functions as the Proton donor in the catalytic mechanism. Gln61 contacts (R)-pantoate. Gln61 is a binding site for beta-alanine. 149-152 provides a ligand contact to ATP; the sequence is GEKD. (R)-pantoate is bound at residue Gln155. Residues Val178 and 186–189 contribute to the ATP site; that span reads LSSR.

It belongs to the pantothenate synthetase family. As to quaternary structure, homodimer.

The protein localises to the cytoplasm. It carries out the reaction (R)-pantoate + beta-alanine + ATP = (R)-pantothenate + AMP + diphosphate + H(+). It participates in cofactor biosynthesis; (R)-pantothenate biosynthesis; (R)-pantothenate from (R)-pantoate and beta-alanine: step 1/1. Its function is as follows. Catalyzes the condensation of pantoate with beta-alanine in an ATP-dependent reaction via a pantoyl-adenylate intermediate. This Salmonella arizonae (strain ATCC BAA-731 / CDC346-86 / RSK2980) protein is Pantothenate synthetase.